The sequence spans 262 residues: Phosphate import ATP-binding protein PstB (262 aa).

An ABC transporter domain is found at 16-257 (MEARHLSVRY…PSEQRTEDYV (242 aa)). Position 48–55 (48–55 (GPSGCGKS)) interacts with ATP.

The protein belongs to the ABC transporter superfamily. Phosphate importer (TC 3.A.1.7) family. In terms of assembly, the complex is composed of two ATP-binding proteins (PstB), two transmembrane proteins (PstC and PstA) and a solute-binding protein (PstS).

The protein resides in the cell inner membrane. The catalysed reaction is phosphate(out) + ATP + H2O = ADP + 2 phosphate(in) + H(+). Functionally, part of the ABC transporter complex PstSACB involved in phosphate import. Responsible for energy coupling to the transport system. The protein is Phosphate import ATP-binding protein PstB of Anaeromyxobacter dehalogenans (strain 2CP-C).